Here is a 662-residue protein sequence, read N- to C-terminus: p-hydroxybenzoic acid efflux pump subunit AaeB (662 aa).

Transmembrane regions (helical) follow at residues 22–42 (FAFK…HLQL), 52–72 (AAIV…SGAI), 76–96 (GMLR…IIIA), 102–122 (VVML…SSLV), 129–149 (IFGL…GTPL), 161–181 (EIVL…PRSI), 378–398 (LFWL…IAVV), 415–435 (FLFG…FIMP), 439–459 (QSML…GLEV), 465–485 (GSLG…PMTF), and 491–511 (LDSA…IMLI).

It belongs to the aromatic acid exporter ArAE (TC 2.A.85) family.

The protein localises to the cell inner membrane. Forms an efflux pump with AaeA. Could function as a metabolic relief valve, allowing to eliminate certain compounds when they accumulate to high levels in the cell. This is p-hydroxybenzoic acid efflux pump subunit AaeB from Pectobacterium atrosepticum (strain SCRI 1043 / ATCC BAA-672) (Erwinia carotovora subsp. atroseptica).